We begin with the raw amino-acid sequence, 469 residues long: Glutamate--tRNA ligase (469 aa).

A 'HIGH' region motif is present at residues 8 to 18 (PSPTGFLHVGG). 4 residues coordinate Zn(2+): cysteine 97, cysteine 99, cysteine 124, and aspartate 126. A 'KMSKS' region motif is present at residues 236 to 240 (KLSKR). Lysine 239 lines the ATP pocket.

It belongs to the class-I aminoacyl-tRNA synthetase family. Glutamate--tRNA ligase type 1 subfamily. Monomer. The cofactor is Zn(2+).

It is found in the cytoplasm. It carries out the reaction tRNA(Glu) + L-glutamate + ATP = L-glutamyl-tRNA(Glu) + AMP + diphosphate. In terms of biological role, catalyzes the attachment of glutamate to tRNA(Glu) in a two-step reaction: glutamate is first activated by ATP to form Glu-AMP and then transferred to the acceptor end of tRNA(Glu). The polypeptide is Glutamate--tRNA ligase (Francisella philomiragia subsp. philomiragia (strain ATCC 25017 / CCUG 19701 / FSC 153 / O#319-036)).